A 565-amino-acid polypeptide reads, in one-letter code: Polyadenylate-binding protein 1-A (565 aa).

RRM domains are found at residues 10-88 (SSLY…WSQR), 98-175 (GNVF…PFKS), 188-265 (TNVF…RAQK), and 284-362 (VNLY…LAQR). A disordered region spans residues 435-466 (YARGQPRQNGPRQNGGQPRQNGPRPDVSGAQP). Residues 440–454 (PRQNGPRQNGGQPRQ) show a composition bias toward polar residues. The 77-residue stretch at 489–565 (SALNLQSIIN…REALEVLGSN (77 aa)) folds into the PABC domain.

The protein belongs to the polyadenylate-binding protein type-1 family.

The protein localises to the cytoplasm. It is found in the nucleus. Functionally, binds the poly(A) tail of mRNA. Appears to be an important mediator of the multiple roles of the poly(A) tail in mRNA biogenesis, stability and translation. The sequence is that of Polyadenylate-binding protein 1-A (pabpc1A) from Dictyostelium discoideum (Social amoeba).